The sequence spans 313 residues: tRNA-cytidine(32) 2-sulfurtransferase (313 aa).

The short motif at S60 to S65 is the PP-loop motif element. Residues C135, C138, and C226 each contribute to the [4Fe-4S] cluster site.

It belongs to the TtcA family. In terms of assembly, homodimer. Mg(2+) serves as cofactor. [4Fe-4S] cluster is required as a cofactor.

It localises to the cytoplasm. It carries out the reaction cytidine(32) in tRNA + S-sulfanyl-L-cysteinyl-[cysteine desulfurase] + AH2 + ATP = 2-thiocytidine(32) in tRNA + L-cysteinyl-[cysteine desulfurase] + A + AMP + diphosphate + H(+). It functions in the pathway tRNA modification. Its function is as follows. Catalyzes the ATP-dependent 2-thiolation of cytidine in position 32 of tRNA, to form 2-thiocytidine (s(2)C32). The sulfur atoms are provided by the cysteine/cysteine desulfurase (IscS) system. This chain is tRNA-cytidine(32) 2-sulfurtransferase, found in Delftia acidovorans (strain DSM 14801 / SPH-1).